Here is a 247-residue protein sequence, read N- to C-terminus: Segregation and condensation protein A (247 aa).

Belongs to the ScpA family. As to quaternary structure, component of a cohesin-like complex composed of ScpA, ScpB and the Smc homodimer, in which ScpA and ScpB bind to the head domain of Smc. The presence of the three proteins is required for the association of the complex with DNA.

Its subcellular location is the cytoplasm. Its function is as follows. Participates in chromosomal partition during cell division. May act via the formation of a condensin-like complex containing Smc and ScpB that pull DNA away from mid-cell into both cell halves. This is Segregation and condensation protein A from Lactobacillus johnsonii (strain CNCM I-12250 / La1 / NCC 533).